Here is a 119-residue protein sequence, read N- to C-terminus: Small ribosomal subunit protein bS16 (119 aa).

This sequence belongs to the bacterial ribosomal protein bS16 family.

This Amoebophilus asiaticus (strain 5a2) protein is Small ribosomal subunit protein bS16.